The chain runs to 393 residues: Formate-dependent phosphoribosylglycinamide formyltransferase (393 aa).

N(1)-(5-phospho-beta-D-ribosyl)glycinamide contacts are provided by residues 22–23 (EL) and Glu82. ATP contacts are provided by residues Arg114, Lys155, 160-165 (SSGKGQ), 195-198 (EGFI), and Glu203. In terms of domain architecture, ATP-grasp spans 119–308 (RLAAEELGLP…EFALHARAIL (190 aa)). 2 residues coordinate Mg(2+): Glu267 and Glu279. N(1)-(5-phospho-beta-D-ribosyl)glycinamide is bound by residues Asp286, Lys356, and 363–364 (RR).

This sequence belongs to the PurK/PurT family. As to quaternary structure, homodimer.

The catalysed reaction is N(1)-(5-phospho-beta-D-ribosyl)glycinamide + formate + ATP = N(2)-formyl-N(1)-(5-phospho-beta-D-ribosyl)glycinamide + ADP + phosphate + H(+). The protein operates within purine metabolism; IMP biosynthesis via de novo pathway; N(2)-formyl-N(1)-(5-phospho-D-ribosyl)glycinamide from N(1)-(5-phospho-D-ribosyl)glycinamide (formate route): step 1/1. Functionally, involved in the de novo purine biosynthesis. Catalyzes the transfer of formate to 5-phospho-ribosyl-glycinamide (GAR), producing 5-phospho-ribosyl-N-formylglycinamide (FGAR). Formate is provided by PurU via hydrolysis of 10-formyl-tetrahydrofolate. The chain is Formate-dependent phosphoribosylglycinamide formyltransferase from Azoarcus sp. (strain BH72).